A 33-amino-acid chain; its full sequence is Beta-theraphotoxin-Cm1b (33 aa).

Intrachain disulfides connect C2–C17, C9–C22, and C16–C29. L33 is subject to Leucine amide.

The protein belongs to the neurotoxin 10 (Hwtx-1) family. 04 (CcoTx1) subfamily. As to expression, expressed by the venom gland.

The protein localises to the secreted. Functionally, inhibits several voltage-gated sodium channels and only one voltage-gated calcium channel (Cav2.2/CACNA1B (IC(50)=1.1 uM) and Nav1.2/SCN2A (IC(50)=3.7-80 nM), Nav1.3/SCN3A (IC(50)=88-5570 nM), Nav1.1/SCN1A (IC(50)=170-407 nM), Nav1.7/SCN9A (IC(50)=95.5-230 nM), Nav1.6/SCN6A (IC(50)=49.9-3990 nM), Nav1.4/SCN4A (IC(50)=113-400 nM or &gt;10 uM), Nav1.5/SCN5A (IC(50)=1524-1634 nM or &gt;10 uM)). The toxin acts by shifting the voltage dependence of channel activation to more depolarized potentials and by blocking the inward component of the sodium current. It shows moderate affinity for lipid bilayers without cholesterol and high affinity for lipid bilayers containing cholesterol. In vivo, this toxin causes general ataxia, lack of response to stimuli, and semiparalysis. After a few minutes, the mice are unable to stand, and breathing is reduced in rhythm and intensity. Symptoms gradually increase with progressive slowing of breathing and flaccid paralysis; death occurred within 10 to 20 minutes post injection. Animals remain totally flaccid, and no symptoms of excitatory neurotoxicity are observed. This chain is Beta-theraphotoxin-Cm1b, found in Ceratogyrus marshalli (Straighthorned baboon tarantula).